A 1603-amino-acid polypeptide reads, in one-letter code: Gag-Pol polyprotein (1603 aa).

Residues 124-141 (KGEEVGETTAQRDAKMAP) show a composition bias toward basic and acidic residues. The interval 124–144 (KGEEVGETTAQRDAKMAPEKM) is disordered. The short motif at 172–175 (PPPY) is the PPXY motif element. The LYPX(n)L motif signature appears at 180–184 (LYPSL). Residues 219 to 229 (LTDWARIREEL) carry the Nuclear export signal motif. 2 CCHC-type zinc fingers span residues 507–524 (GLCY…QCPK) and 533–550 (ERCQ…QCRR). The tract at residues 544 to 571 (NAKQCRRRDGNQGQRPGKGLSSGSWPVS) is disordered. The Peptidase A2 domain occupies 609 to 690 (ITALLDSGAD…VRGSILGRDC (82 aa)). Asp614 (for protease activity; shared with dimeric partner) is an active-site residue. Positions 750–938 (LQLGHIEPSL…PGVQYLGYKL (189 aa)) constitute a Reverse transcriptase domain. Asp815, Asp890, Asp891, Asp1158, Glu1192, Asp1213, and Asp1272 together coordinate Mg(2+). An RNase H type-1 domain is found at 1149 to 1280 (PVPGPTAFTD…ADSQATFQAY (132 aa)). Residues 1280–1321 (YPLREAKDLHTALHIGPRALSKACNISMQQAREVVQTCPHCN) form an Integrase-type zinc finger. Residues His1289, His1293, Cys1317, and Cys1320 each coordinate Zn(2+). The Integrase catalytic domain occupies 1333 to 1496 (RGLGPLQIWQ…TPIQKHWRPT (164 aa)). Residues Asp1344, Asp1401, and Glu1437 each coordinate Mg(2+). Positions 1502 to 1550 (PPVKIRIETGEWEKGWNVLVWGRGYAAVKNRDTDKVIWVPSRKVKPDVT) form a DNA-binding region, integrase-type. The tract at residues 1548–1567 (DVTQKDEVTKKDEASPLFAG) is involved in homooctamerization. The segment at 1566–1603 (AGISDWIPWEDEQEGLQGETASNKQERPGEDTLAANES) is disordered.

In terms of assembly, active as a homodimer. Homodimer. Homomultimer. Homohexamer. As to quaternary structure, homodimer; further associates as a homooctamer. In terms of assembly, heterodimer of alpha and beta subunits. Three forms of RT exist: alpha-alpha (alpha-Pol), beta-beta (beta-Pol), and alpha-beta, with the major form being the heterodimer. Both the polymerase and RNase H active sites are located in the alpha subunit of heterodimeric RT alpha-beta. The cofactor is Mg(2+). Mn(2+) serves as cofactor. In terms of processing, specific enzymatic cleavages in vivo yield mature proteins. Capsid protein p27: The cleavage at the C-terminus is slowly trimmed by the viral protease, sometimes being cut internally thereby generating the short version of the capsid protein and a capsid protein C-terminally extended by 3 amino acids in a ratio of 2:1.

It localises to the virion. The enzyme catalyses DNA(n) + a 2'-deoxyribonucleoside 5'-triphosphate = DNA(n+1) + diphosphate. It catalyses the reaction Endonucleolytic cleavage to 5'-phosphomonoester.. In terms of biological role, capsid protein p27: Self-associates to form the irregular polyhedron core composed of hexamers and pentamers, that encapsulates the genomic RNA-nucleocapsid complex. Assembles as a tube in vitro. Binds to inositol hexakisphosphate (IP6), which allows the assembly of the polyhedral capsid. Spacer peptide: Plays a role in the oligomerization of the Gag polyprotein and in the stabilization of the immature particle. Essential layering element during tube assembly. Its function is as follows. Binds strongly to viral nucleic acids and promotes their packaging. Plays a role in the maturation-stabilization of the viral dimeric RNA via highly structured zinc-binding motifs. Functionally, the aspartyl protease that mediates proteolytic cleavages of Gag and Gag-Pol polyproteins during or shortly after the release of the virion from the plasma membrane. Cleavages take place as an ordered, step-wise cascade to yield mature proteins. This process is called maturation. Displays maximal activity during the budding process just prior to particle release from the cell. In terms of biological role, catalyzes viral DNA integration into the host chromosome, by performing a series of DNA cutting and joining reactions. This recombination event is an essential step in the viral replication cycle. Has a strong preference for using the 3'-OH at the viral DNA end as a nucleophile. This is Gag-Pol polyprotein (gag-pol) from Avian leukosis virus subgroup A (isolate RSA) (ALV-A RSA).